Consider the following 358-residue polypeptide: Protein-glutamate methylesterase/protein-glutamine glutaminase 1 (358 aa).

The Response regulatory domain occupies 7 to 124 (SVLLVDDSAV…KNFLIDSAAE (118 aa)). Residue D58 is modified to 4-aspartylphosphate. Positions 170 to 358 (AQTTERIVAI…QEIHQAILHR (189 aa)) constitute a CheB-type methylesterase domain. Residues S182, H208, and D304 contribute to the active site.

It belongs to the CheB family. In terms of processing, phosphorylated by CheA. Phosphorylation of the N-terminal regulatory domain activates the methylesterase activity.

It localises to the cytoplasm. It catalyses the reaction [protein]-L-glutamate 5-O-methyl ester + H2O = L-glutamyl-[protein] + methanol + H(+). It carries out the reaction L-glutaminyl-[protein] + H2O = L-glutamyl-[protein] + NH4(+). Functionally, involved in chemotaxis. Part of a chemotaxis signal transduction system that modulates chemotaxis in response to various stimuli. Catalyzes the demethylation of specific methylglutamate residues introduced into the chemoreceptors (methyl-accepting chemotaxis proteins or MCP) by CheR. Also mediates the irreversible deamidation of specific glutamine residues to glutamic acid. The polypeptide is Protein-glutamate methylesterase/protein-glutamine glutaminase 1 (Pseudomonas savastanoi pv. phaseolicola (strain 1448A / Race 6) (Pseudomonas syringae pv. phaseolicola (strain 1448A / Race 6))).